A 212-amino-acid polypeptide reads, in one-letter code: Imidazole glycerol phosphate synthase subunit HisH (212 aa).

Residues 3–212 (TVAVIDYGMG…QNFIAWDGRW (210 aa)) form the Glutamine amidotransferase type-1 domain. Catalysis depends on cysteine 81, which acts as the Nucleophile. Active-site residues include histidine 190 and glutamate 192.

As to quaternary structure, heterodimer of HisH and HisF.

Its subcellular location is the cytoplasm. It catalyses the reaction 5-[(5-phospho-1-deoxy-D-ribulos-1-ylimino)methylamino]-1-(5-phospho-beta-D-ribosyl)imidazole-4-carboxamide + L-glutamine = D-erythro-1-(imidazol-4-yl)glycerol 3-phosphate + 5-amino-1-(5-phospho-beta-D-ribosyl)imidazole-4-carboxamide + L-glutamate + H(+). The catalysed reaction is L-glutamine + H2O = L-glutamate + NH4(+). It participates in amino-acid biosynthesis; L-histidine biosynthesis; L-histidine from 5-phospho-alpha-D-ribose 1-diphosphate: step 5/9. Its function is as follows. IGPS catalyzes the conversion of PRFAR and glutamine to IGP, AICAR and glutamate. The HisH subunit catalyzes the hydrolysis of glutamine to glutamate and ammonia as part of the synthesis of IGP and AICAR. The resulting ammonia molecule is channeled to the active site of HisF. The chain is Imidazole glycerol phosphate synthase subunit HisH from Pseudomonas putida (strain ATCC 47054 / DSM 6125 / CFBP 8728 / NCIMB 11950 / KT2440).